We begin with the raw amino-acid sequence, 688 residues long: Transcription factor GTE9 (688 aa).

The segment at 1–36 (MTERNGGFPGDYCFEAPGGDYDEGSDSPRVSEGSNC) is disordered. Positions 132-238 (TAVMLLMKQC…KFFEVRWKTL (107 aa)) constitute a Bromo domain. The NET domain maps to 280-361 (ENVVDPAKRV…EHLREIQNKK (82 aa)). The tract at residues 423–505 (GNSLGSVSGD…AQNEKQLPPE (83 aa)) is disordered. Ser-478 is modified (phosphoserine). Polar residues predominate over residues 491-500 (QDGNSAQNEK). The interval 505–688 (EKSYRAAILK…EIDIEEGEID (184 aa)) is transcription activation domain. A coiled-coil region spans residues 534–613 (TRDPEKLQRE…QSVELNENAK (80 aa)). Residues 660–688 (FMKQDEDEEEADPLTSPAPEIDIEEGEID) form a disordered region.

As to quaternary structure, interacts with BT1.

It is found in the nucleus. This is Transcription factor GTE9 (GTE9) from Arabidopsis thaliana (Mouse-ear cress).